The sequence spans 47 residues: Large ribosomal subunit protein bL32c (47 aa).

It belongs to the bacterial ribosomal protein bL32 family.

The protein localises to the plastid. The protein is Large ribosomal subunit protein bL32c (rpl32) of Prototheca wickerhamii.